The following is a 295-amino-acid chain: ATP synthase gamma chain (295 aa).

It belongs to the ATPase gamma chain family. F-type ATPases have 2 components, CF(1) - the catalytic core - and CF(0) - the membrane proton channel. CF(1) has five subunits: alpha(3), beta(3), gamma(1), delta(1), epsilon(1). CF(0) has three main subunits: a, b and c.

It is found in the cell inner membrane. Produces ATP from ADP in the presence of a proton gradient across the membrane. The gamma chain is believed to be important in regulating ATPase activity and the flow of protons through the CF(0) complex. This is ATP synthase gamma chain from Cytophaga hutchinsonii (strain ATCC 33406 / DSM 1761 / CIP 103989 / NBRC 15051 / NCIMB 9469 / D465).